Here is a 72-residue protein sequence, read N- to C-terminus: UPF0729 protein C18orf32 homolog (72 aa).

The necessary for its localzation to the endoplasmic reticulum and lipid droplets stretch occupies residues 1–33 (MVCIPCIVIPVLLWIFKKFLEPYIYPVVSRIWP). Residues 36-72 (AVQQSGDKNMSKVDCKGAGTNGLPTKGPTEVSDKKKD) are disordered.

The protein belongs to the UPF0729 family. As to quaternary structure, interacts with DERL1 and AMFR. In terms of processing, undergoes ER-associated degradation (ERAD).

Its subcellular location is the endoplasmic reticulum. The protein resides in the lipid droplet. In terms of biological role, may activate the NF-kappa-B signaling pathway. The polypeptide is UPF0729 protein C18orf32 homolog (Mus musculus (Mouse)).